Here is a 324-residue protein sequence, read N- to C-terminus: Protein ChrB (324 aa).

In terms of biological role, together with ChrA1, this protein reduces chromate accumulation and is essential for chromate resistance, possibly as a regulatory protein. The sequence is that of Protein ChrB from Cupriavidus metallidurans (strain ATCC 43123 / DSM 2839 / NBRC 102507 / CH34) (Ralstonia metallidurans).